A 113-amino-acid polypeptide reads, in one-letter code: Cell cycle protein GpsB (113 aa).

Positions 36 to 65 form a coiled coil; the sequence is IKDYETYAALVKSLRQEIADLKEELARKPQ. The tract at residues 61-82 is disordered; that stretch reads ARKPQVSSAPSPSHPDPIDVAA.

Belongs to the GpsB family. As to quaternary structure, forms polymers through the coiled coil domains. Interacts with PBP1, MreC and EzrA.

Its subcellular location is the cytoplasm. Divisome component that associates with the complex late in its assembly, after the Z-ring is formed, and is dependent on DivIC and PBP2B for its recruitment to the divisome. Together with EzrA, is a key component of the system that regulates PBP1 localization during cell cycle progression. Its main role could be the removal of PBP1 from the cell pole after pole maturation is completed. Also contributes to the recruitment of PBP1 to the division complex. Not essential for septum formation. The polypeptide is Cell cycle protein GpsB (Streptococcus pneumoniae (strain Hungary19A-6)).